The sequence spans 87 residues: Small ribosomal subunit protein bS16 (87 aa).

Belongs to the bacterial ribosomal protein bS16 family.

This chain is Small ribosomal subunit protein bS16, found in Variovorax paradoxus (strain S110).